Consider the following 270-residue polypeptide: Putative tRNA (cytidine(32)/guanosine(34)-2'-O)-methyltransferase (270 aa).

S-adenosyl-L-methionine-binding residues include G53, W55, D78, D94, and D119. Catalysis depends on K159, which acts as the Proton acceptor.

Belongs to the class I-like SAM-binding methyltransferase superfamily. RNA methyltransferase RlmE family. TRM7 subfamily.

The protein localises to the cytoplasm. The enzyme catalyses cytidine(32)/guanosine(34) in tRNA + 2 S-adenosyl-L-methionine = 2'-O-methylcytidine(32)/2'-O-methylguanosine(34) in tRNA + 2 S-adenosyl-L-homocysteine + 2 H(+). Its function is as follows. Methylates the 2'-O-ribose of nucleotides at positions 32 and 34 of the tRNA anticodon loop of substrate tRNAs. The sequence is that of Putative tRNA (cytidine(32)/guanosine(34)-2'-O)-methyltransferase (fsjA) from Dictyostelium discoideum (Social amoeba).